Consider the following 132-residue polypeptide: Ribosome-binding factor A (132 aa).

The protein belongs to the RbfA family. As to quaternary structure, monomer. Binds 30S ribosomal subunits, but not 50S ribosomal subunits or 70S ribosomes.

It localises to the cytoplasm. Its function is as follows. One of several proteins that assist in the late maturation steps of the functional core of the 30S ribosomal subunit. Associates with free 30S ribosomal subunits (but not with 30S subunits that are part of 70S ribosomes or polysomes). Required for efficient processing of 16S rRNA. May interact with the 5'-terminal helix region of 16S rRNA. This is Ribosome-binding factor A from Burkholderia cenocepacia (strain ATCC BAA-245 / DSM 16553 / LMG 16656 / NCTC 13227 / J2315 / CF5610) (Burkholderia cepacia (strain J2315)).